The primary structure comprises 210 residues: 3-hexulose-6-phosphate synthase (210 aa).

This sequence belongs to the HPS/KGPDC family. HPS subfamily.

The catalysed reaction is D-ribulose 5-phosphate + formaldehyde = D-arabino-hex-3-ulose 6-phosphate. The protein operates within one-carbon metabolism; formaldehyde assimilation via RuMP pathway; D-fructose 6-phosphate from D-ribulose 5-phosphate and formaldehyde: step 1/2. Catalyzes the condensation of ribulose 5-phosphate with formaldehyde to form 3-hexulose 6-phosphate. The polypeptide is 3-hexulose-6-phosphate synthase (Staphylococcus aureus (strain bovine RF122 / ET3-1)).